A 68-amino-acid chain; its full sequence is Large ribosomal subunit protein bL35 (68 aa).

Composition is skewed to basic residues over residues 1 to 11 (MPKLKTRSSAK) and 19 to 29 (SGKVKHGKAFA). The segment at 1–54 (MPKLKTRSSAKKRFDVKKSGKVKHGKAFAKHLFTFSKTPKSKRSNRGTGHLRDM) is disordered.

It belongs to the bacterial ribosomal protein bL35 family.

The protein is Large ribosomal subunit protein bL35 of Myxococcus xanthus (strain DK1622).